A 393-amino-acid polypeptide reads, in one-letter code: Acetate kinase (393 aa).

Asn-7 contacts Mg(2+). Lys-14 contacts ATP. Residue Arg-89 coordinates substrate. Asp-146 (proton donor/acceptor) is an active-site residue. Residues 204-208, 279-281, and 327-331 contribute to the ATP site; these read HIGNG, DSR, and GIGEN. Position 379 (Glu-379) interacts with Mg(2+).

It belongs to the acetokinase family. As to quaternary structure, homodimer. Mg(2+) is required as a cofactor. It depends on Mn(2+) as a cofactor.

The protein resides in the cytoplasm. The enzyme catalyses acetate + ATP = acetyl phosphate + ADP. The protein operates within metabolic intermediate biosynthesis; acetyl-CoA biosynthesis; acetyl-CoA from acetate: step 1/2. Catalyzes the formation of acetyl phosphate from acetate and ATP. Can also catalyze the reverse reaction. This chain is Acetate kinase, found in Acholeplasma laidlawii (strain PG-8A).